The sequence spans 191 residues: Thymidylate kinase (191 aa).

Gly7–Ser14 lines the ATP pocket.

It belongs to the thymidylate kinase family.

It carries out the reaction dTMP + ATP = dTDP + ADP. In terms of biological role, phosphorylation of dTMP to form dTDP in both de novo and salvage pathways of dTTP synthesis. This chain is Thymidylate kinase, found in Helicobacter acinonychis (strain Sheeba).